Consider the following 249-residue polypeptide: tRNA(Phe) (4-demethylwyosine(37)-C(7)) aminocarboxypropyltransferase (249 aa).

S-adenosyl-L-methionine is bound by residues Ser-80, Arg-87, Glu-127, and 154-155; that span reads DN.

The protein belongs to the class I-like SAM-binding methyltransferase superfamily. TRM5/TYW2 family.

It is found in the cytoplasm. It catalyses the reaction 4-demethylwyosine(37) in tRNA(Phe) + S-adenosyl-L-methionine = 4-demethyl-7-[(3S)-3-amino-3-carboxypropyl]wyosine(37) in tRNA(Phe) + S-methyl-5'-thioadenosine + H(+). Functionally, S-adenosyl-L-methionine-dependent transferase that acts as a component of the wyosine derivatives biosynthesis pathway. Catalyzes the transfer of the alpha-amino-alpha-carboxypropyl (acp) group from S-adenosyl-L-methionine to 4-demethylwyosine (imG-14), forming 7-aminocarboxypropyl-demethylwyosine (wybutosine-86) at position 37 of tRNA(Phe). The sequence is that of tRNA(Phe) (4-demethylwyosine(37)-C(7)) aminocarboxypropyltransferase from Methanocaldococcus jannaschii (strain ATCC 43067 / DSM 2661 / JAL-1 / JCM 10045 / NBRC 100440) (Methanococcus jannaschii).